Reading from the N-terminus, the 99-residue chain is U8-agatoxin-Ao1a (99 aa).

The signal sequence occupies residues 1–19 (MKSLLFVTIAVYFVAQAVT). A propeptide spanning residues 20 to 45 (ANLLSNFLGSSLIDDDKGNMHKLYKR) is cleaved from the precursor.

It belongs to the neurotoxin 02 (plectoxin) family. Post-translationally, contains 5 disulfide bonds. As to expression, expressed by the venom gland.

It localises to the secreted. This Agelena orientalis (Funnel-web spider) protein is U8-agatoxin-Ao1a.